The primary structure comprises 284 residues: Tropomyosin (284 aa).

Residues 1–284 (MDAIKKKMLM…DQALNELHNM (284 aa)) adopt a coiled-coil conformation. Disordered stretches follow at residues 106–134 (LNSTVEKLTDSEKAADESERARKVLENRQ) and 186–221 (AETKARELEDELKTTTGQLKSMEAQATKASEKEEAY). Composition is skewed to basic and acidic residues over residues 112–134 (KLTDSEKAADESERARKVLENRQ) and 186–198 (AETKARELEDELK).

Belongs to the tropomyosin family. Homodimer.

Its function is as follows. Tropomyosin, in association with the troponin complex, plays a central role in the calcium dependent regulation of muscle contraction. In Branchiostoma belcheri (Amphioxus), this protein is Tropomyosin (TPM).